A 147-amino-acid polypeptide reads, in one-letter code: 3-dehydroquinate dehydratase (147 aa).

Residue Tyr-22 is the Proton acceptor of the active site. Substrate-binding residues include Asn-74, His-80, and Asp-87. His-101 (proton donor) is an active-site residue. Residues 102-103 (IS) and Arg-112 contribute to the substrate site.

This sequence belongs to the type-II 3-dehydroquinase family. Homododecamer.

The catalysed reaction is 3-dehydroquinate = 3-dehydroshikimate + H2O. Its pathway is metabolic intermediate biosynthesis; chorismate biosynthesis; chorismate from D-erythrose 4-phosphate and phosphoenolpyruvate: step 3/7. Its function is as follows. Catalyzes a trans-dehydration via an enolate intermediate. This chain is 3-dehydroquinate dehydratase, found in Lachnospira eligens (strain ATCC 27750 / DSM 3376 / VPI C15-48 / C15-B4) (Eubacterium eligens).